Reading from the N-terminus, the 362-residue chain is 3-dehydroquinate synthase (362 aa).

NAD(+)-binding positions include 71–76 (DGEQYK), 105–109 (GVVGD), 129–130 (TT), lysine 142, lysine 151, and 169–172 (CLKT). Residues glutamate 184, histidine 247, and histidine 264 each contribute to the Zn(2+) site.

Belongs to the sugar phosphate cyclases superfamily. Dehydroquinate synthase family. The cofactor is Co(2+). Zn(2+) is required as a cofactor. Requires NAD(+) as cofactor.

It is found in the cytoplasm. It carries out the reaction 7-phospho-2-dehydro-3-deoxy-D-arabino-heptonate = 3-dehydroquinate + phosphate. Its pathway is metabolic intermediate biosynthesis; chorismate biosynthesis; chorismate from D-erythrose 4-phosphate and phosphoenolpyruvate: step 2/7. In terms of biological role, catalyzes the conversion of 3-deoxy-D-arabino-heptulosonate 7-phosphate (DAHP) to dehydroquinate (DHQ). The polypeptide is 3-dehydroquinate synthase (Escherichia coli O81 (strain ED1a)).